Here is a 249-residue protein sequence, read N- to C-terminus: U2 small nuclear ribonucleoprotein A' (249 aa).

LRR repeat units lie at residues 20–41 (KERELDLRGNKIPVIENLGATE), 43–64 (QFDTIDLSDNEIVKLENFPYLN), 65–87 (RLGTLLINNNRITRINPNLGEFL), and 89–110 (KLHSLVLTNNRLVNLVEIDPLA). In terms of domain architecture, LRRCT spans 123-161 (NNITKKANYRLYVIHKLKSLRVLDFIKIKAKERAEAASL).

It belongs to the U2 small nuclear ribonucleoprotein A family.

The protein resides in the nucleus. Its subcellular location is the nucleus speckle. This protein is associated with sn-RNP U2. It helps the A' protein to bind stem loop IV of U2 snRNA. The chain is U2 small nuclear ribonucleoprotein A' from Arabidopsis thaliana (Mouse-ear cress).